A 245-amino-acid polypeptide reads, in one-letter code: 8-amino-3,8-dideoxy-manno-octulosonate cytidylyltransferase (245 aa).

It belongs to the KdsB family.

The protein localises to the cytoplasm. The catalysed reaction is 8-amino-3,8-dideoxy-alpha-D-manno-octulosonate + CTP = CMP-8-amino-3,8-dideoxy-alpha-D-manno-oct-2-ulosonate + diphosphate. Its pathway is bacterial outer membrane biogenesis; lipopolysaccharide biosynthesis. Activates KDO8N (a required 8-carbon sugar) for incorporation into bacterial lipopolysaccharide in the Shewanella genus. The sequence is that of 8-amino-3,8-dideoxy-manno-octulosonate cytidylyltransferase from Shewanella pealeana (strain ATCC 700345 / ANG-SQ1).